A 321-amino-acid polypeptide reads, in one-letter code: Transaldolase (321 aa).

Residue lysine 132 is the Schiff-base intermediate with substrate of the active site.

This sequence belongs to the transaldolase family. Type 1 subfamily. Homodimer.

The protein localises to the cytoplasm. The catalysed reaction is D-sedoheptulose 7-phosphate + D-glyceraldehyde 3-phosphate = D-erythrose 4-phosphate + beta-D-fructose 6-phosphate. It participates in carbohydrate degradation; pentose phosphate pathway; D-glyceraldehyde 3-phosphate and beta-D-fructose 6-phosphate from D-ribose 5-phosphate and D-xylulose 5-phosphate (non-oxidative stage): step 2/3. Functionally, transaldolase is important for the balance of metabolites in the pentose-phosphate pathway. This is Transaldolase from Agrobacterium fabrum (strain C58 / ATCC 33970) (Agrobacterium tumefaciens (strain C58)).